A 231-amino-acid polypeptide reads, in one-letter code: Large ribosomal subunit protein uL1 (231 aa).

It belongs to the universal ribosomal protein uL1 family. As to quaternary structure, part of the 50S ribosomal subunit.

Its function is as follows. Binds directly to 23S rRNA. The L1 stalk is quite mobile in the ribosome, and is involved in E site tRNA release. In terms of biological role, protein L1 is also a translational repressor protein, it controls the translation of the L11 operon by binding to its mRNA. The polypeptide is Large ribosomal subunit protein uL1 (Nitrosomonas eutropha (strain DSM 101675 / C91 / Nm57)).